The sequence spans 782 residues: cGMP-specific 3',5'-cyclic phosphodiesterase gamma (782 aa).

The Cytoplasmic segment spans residues 1-69 (MKHMFKNILF…LCDNMYSKKY (69 aa)). The helical transmembrane segment at 70 to 90 (VILVSHLISLLLMYSVCLIVG) threads the bilayer. The Extracellular segment spans residues 91–97 (NINDLFS). The helical transmembrane segment at 98 to 118 (VLKLTYILLHTFTAINIILIL) threads the bilayer. At 119-135 (TLHATHYVEMFKSIKGE) the chain is on the cytoplasmic side. Residues 136-156 (IFIFYIMMIFVIWCSWLFILF) traverse the membrane as a helical segment. Topologically, residues 157-181 (NNIKDLLPIVVNVNNFLYATYANNK) are extracellular. A helical transmembrane segment spans residues 182–202 (INIVLGFFAYLPIFYLITIIP). At 203–208 (CRICYS) the chain is on the cytoplasmic side. Residues 209 to 229 (CAFDILFFIMKVAIFSVYYLI) form a helical membrane-spanning segment. The Extracellular segment spans residues 230–239 (TMKSYILTDN). A helical membrane pass occupies residues 240 to 260 (IFMIISALVGSLFIFVIRYII). At 261-782 (EIQRRLSFHN…YAPNLNIYKL (522 aa)) the chain is on the cytoplasmic side. The interval 376-396 (GSKEEPEAESESECVDESKEG) is disordered. Over residues 381-390 (PEAESESECV) the composition is skewed to acidic residues. In terms of domain architecture, PDEase spans 423 to 751 (YEEKENEILK…SKWTKIEKDE (329 aa)). His504 acts as the Proton donor in catalysis. 504-508 (HNSIH) contacts a nucleoside 3',5'-cyclic phosphate. Residues His508, His544, Asp545, and Asp654 each coordinate a divalent metal cation. Asp545, Asp654, and Gln706 together coordinate a nucleoside 3',5'-cyclic phosphate.

This sequence belongs to the cyclic nucleotide phosphodiesterase family. Requires a divalent metal cation as cofactor.

Its subcellular location is the membrane. The protein resides in the endoplasmic reticulum membrane. It carries out the reaction 3',5'-cyclic GMP + H2O = GMP + H(+). Its pathway is purine metabolism; 3',5'-cyclic GMP degradation; GMP from 3',5'-cyclic GMP: step 1/1. Its function is as follows. Specifically hydrolyzes the second messenger cGMP, which is a key regulator of many important physiological processes. Probably by regulating cGMP levels, required for sporozoite motility and invasion of the mosquito salivary glands. The protein is cGMP-specific 3',5'-cyclic phosphodiesterase gamma of Plasmodium yoelii.